The primary structure comprises 143 residues: Nucleoside diphosphate kinase (143 aa).

6 residues coordinate ATP: K11, F59, R87, T93, R104, and N114. Residue H117 is the Pros-phosphohistidine intermediate of the active site.

This sequence belongs to the NDK family. Homotetramer. Mg(2+) serves as cofactor.

It localises to the cytoplasm. It catalyses the reaction a 2'-deoxyribonucleoside 5'-diphosphate + ATP = a 2'-deoxyribonucleoside 5'-triphosphate + ADP. It carries out the reaction a ribonucleoside 5'-diphosphate + ATP = a ribonucleoside 5'-triphosphate + ADP. In terms of biological role, major role in the synthesis of nucleoside triphosphates other than ATP. The ATP gamma phosphate is transferred to the NDP beta phosphate via a ping-pong mechanism, using a phosphorylated active-site intermediate. The sequence is that of Nucleoside diphosphate kinase from Shewanella amazonensis (strain ATCC BAA-1098 / SB2B).